Reading from the N-terminus, the 234-residue chain is Small ribosomal subunit protein uS3 (234 aa).

The KH type-2 domain occupies 39-108 (IRKFVKKKLF…TVIVNVVEVK (70 aa)). Residues 212 to 234 (KGKNEETNNETADNSRGRRREAK) are disordered.

It belongs to the universal ribosomal protein uS3 family. In terms of assembly, part of the 30S ribosomal subunit. Forms a tight complex with proteins S10 and S14.

Binds the lower part of the 30S subunit head. Binds mRNA in the 70S ribosome, positioning it for translation. The polypeptide is Small ribosomal subunit protein uS3 (Alkaliphilus metalliredigens (strain QYMF)).